A 189-amino-acid chain; its full sequence is HTH-type transcriptional repressor LfrR (189 aa).

One can recognise an HTH tetR-type domain in the interval 12–70; sequence ERTRRAILDAAMLVLADHPTAALGDIAAAAGVGRSTVHRYYPERTDLLRALARHVHDLS. The segment at residues 33-52 is a DNA-binding region (H-T-H motif); the sequence is ALGDIAAAAGVGRSTVHRYY. Positions 70-71 are proflavine binding; that stretch reads SN.

As to quaternary structure, homodimer. Forms a structurally asymmetric homodimer exhibiting local unfolding and a blocked drug-binding site.

With respect to regulation, repressor activity is regulated by binding of different substrates of the LfrA multidrug efflux pump, such as acriflavine, proflavine, ethidium bromide and rhodamine 123. Binding of these ligands causes the dissociation of LfrR from the promoter, inducing lfrA expression. Represses the transcription of the lfrRA operon by binding directly to the promoter region of lfrR-lfrA. Binds specifically to a 143-bp region upstream of the lfrR gene. This chain is HTH-type transcriptional repressor LfrR, found in Mycolicibacterium smegmatis (strain ATCC 700084 / mc(2)155) (Mycobacterium smegmatis).